The sequence spans 259 residues: Flap endonuclease Xni (259 aa).

Aspartate 109 contributes to the Mg(2+) binding site. A 5'-3' exonuclease domain is found at valine 165–alanine 255. The K(+) site is built by leucine 176, isoleucine 187, and isoleucine 190. The segment at glycine 189–alanine 194 is interaction with DNA.

This sequence belongs to the Xni family. The cofactor is Mg(2+). It depends on K(+) as a cofactor.

Functionally, has flap endonuclease activity. During DNA replication, flap endonucleases cleave the 5'-overhanging flap structure that is generated by displacement synthesis when DNA polymerase encounters the 5'-end of a downstream Okazaki fragment. The chain is Flap endonuclease Xni from Vibrio vulnificus (strain YJ016).